Consider the following 359-residue polypeptide: Peptide chain release factor 1 (359 aa).

At Gln236 the chain carries N5-methylglutamine.

Belongs to the prokaryotic/mitochondrial release factor family. Post-translationally, methylated by PrmC. Methylation increases the termination efficiency of RF1.

Its subcellular location is the cytoplasm. Functionally, peptide chain release factor 1 directs the termination of translation in response to the peptide chain termination codons UAG and UAA. This is Peptide chain release factor 1 from Streptococcus pyogenes serotype M18 (strain MGAS8232).